The sequence spans 355 residues: Green-sensitive opsin-1 (355 aa).

The Extracellular portion of the chain corresponds to 1–49 (MAAHADEPVFAARRYNEETTRESAFVYTNANNTRDPFEGPNYHIAPRWV). Asn-31 carries N-linked (GlcNAc...) asparagine glycosylation. The chain crosses the membrane as a helical span at residues 50-74 (YNLASLWMIIVVIASIFTNSLVIVA). The Cytoplasmic segment spans residues 75–86 (TAKFKKLRHPLN). A helical membrane pass occupies residues 87-112 (WILVNLAIADLGETVLASTISVFNQV). Residues 113-126 (FGYFVLGHPMCIFE) lie on the Extracellular side of the membrane. A disulfide bond links Cys-123 and Cys-200. The helical transmembrane segment at 127-146 (GWTVSVCGITALWSLTIISW) threads the bilayer. Residues 147-165 (ERWVVVCKPFGNVKFDGKW) are Cytoplasmic-facing. Residues 166–189 (AAGGIIFAWTWAIIWCTPPIFGWS) form a helical membrane-spanning segment. Topologically, residues 190 to 215 (RYWPHGLKTSCGPDVFSGSEDPGVAS) are extracellular. Residues 216-243 (YMVTLLLTCCILPLSVIIICYIFVWNAI) traverse the membrane as a helical segment. Residues 244–265 (HQVAQQQKDSESTQKAEKEVSR) lie on the Cytoplasmic side of the membrane. The chain crosses the membrane as a helical span at residues 266–289 (MVVVMILAFILCWGPYASFATFSA). Topologically, residues 290–297 (LNPGYAWH) are extracellular. A helical transmembrane segment spans residues 298-322 (PLAAALPAYFAKSATIYNPIIYVFM). Lys-309 is subject to N6-(retinylidene)lysine. The Cytoplasmic portion of the chain corresponds to 323 to 355 (NRQFRSCIMQLFGKKVEDASEVSGSTTEVSTAS).

This sequence belongs to the G-protein coupled receptor 1 family. Opsin subfamily. The color pigments are found in the cone photoreceptor cells.

The protein resides in the membrane. In terms of biological role, visual pigments are the light-absorbing molecules that mediate vision. They consist of an apoprotein, opsin, covalently linked to cis-retinal. The protein is Green-sensitive opsin-1 (G103) of Psalidodon fasciatus (Banded astyanax).